Consider the following 295-residue polypeptide: Glutamyl-Q tRNA(Asp) synthetase (295 aa).

Residues 9-13 (RFAPT) and Glu45 contribute to the L-glutamate site. Positions 12–22 (PTPSGFLHFGS) match the 'HIGH' region motif. Zn(2+) contacts are provided by Cys101, Cys103, Tyr115, and Cys119. Tyr172 and Arg190 together coordinate L-glutamate. Positions 228–232 (KLGKS) match the 'KMSKS' region motif. ATP is bound at residue Lys231.

The protein belongs to the class-I aminoacyl-tRNA synthetase family. GluQ subfamily. Zn(2+) serves as cofactor.

In terms of biological role, catalyzes the tRNA-independent activation of glutamate in presence of ATP and the subsequent transfer of glutamate onto a tRNA(Asp). Glutamate is transferred on the 2-amino-5-(4,5-dihydroxy-2-cyclopenten-1-yl) moiety of the queuosine in the wobble position of the QUC anticodon. This chain is Glutamyl-Q tRNA(Asp) synthetase, found in Pseudomonas putida (strain W619).